Here is a 304-residue protein sequence, read N- to C-terminus: UDP-3-O-acyl-N-acetylglucosamine deacetylase (304 aa).

Positions 78, 237, and 241 each coordinate Zn(2+). His-264 (proton donor) is an active-site residue.

It belongs to the LpxC family. The cofactor is Zn(2+).

It catalyses the reaction a UDP-3-O-[(3R)-3-hydroxyacyl]-N-acetyl-alpha-D-glucosamine + H2O = a UDP-3-O-[(3R)-3-hydroxyacyl]-alpha-D-glucosamine + acetate. It functions in the pathway glycolipid biosynthesis; lipid IV(A) biosynthesis; lipid IV(A) from (3R)-3-hydroxytetradecanoyl-[acyl-carrier-protein] and UDP-N-acetyl-alpha-D-glucosamine: step 2/6. Catalyzes the hydrolysis of UDP-3-O-myristoyl-N-acetylglucosamine to form UDP-3-O-myristoylglucosamine and acetate, the committed step in lipid A biosynthesis. The polypeptide is UDP-3-O-acyl-N-acetylglucosamine deacetylase (Acidithiobacillus ferrooxidans (strain ATCC 53993 / BNL-5-31) (Leptospirillum ferrooxidans (ATCC 53993))).